We begin with the raw amino-acid sequence, 187 residues long: MLQVLPADAAELVEQGGVIAYPTEAVYGLGCDPDNDEAINQLLQIKQRPWQKGLILVAGDYQQLLPYIDESQLNAQQLAFAQSKWPGPFTFIMPVKPGLSKLLSGAFDSIAVRVTAHAGVKALCAAIHKPIVSTSANLSGQEPALSPLAVKQQFEGIISGLVVGELGSQASPSTIIDARSGTVIREG.

Positions 3–187 (QVLPADAAEL…ARSGTVIREG (185 aa)) constitute a YrdC-like domain.

The protein belongs to the SUA5 family. TsaC subfamily.

The protein resides in the cytoplasm. The catalysed reaction is L-threonine + hydrogencarbonate + ATP = L-threonylcarbamoyladenylate + diphosphate + H2O. Functionally, required for the formation of a threonylcarbamoyl group on adenosine at position 37 (t(6)A37) in tRNAs that read codons beginning with adenine. Catalyzes the conversion of L-threonine, HCO(3)(-)/CO(2) and ATP to give threonylcarbamoyl-AMP (TC-AMP) as the acyladenylate intermediate, with the release of diphosphate. This is Threonylcarbamoyl-AMP synthase from Shewanella pealeana (strain ATCC 700345 / ANG-SQ1).